We begin with the raw amino-acid sequence, 129 residues long: Small ribosomal subunit protein uS11c (129 aa).

Belongs to the universal ribosomal protein uS11 family. As to quaternary structure, part of the 30S ribosomal subunit.

It localises to the plastid. It is found in the chloroplast. The sequence is that of Small ribosomal subunit protein uS11c from Rhodomonas salina (Cryptomonas salina).